We begin with the raw amino-acid sequence, 143 residues long: Large ribosomal subunit protein uL11 (143 aa).

It belongs to the universal ribosomal protein uL11 family. Part of the ribosomal stalk of the 50S ribosomal subunit. Interacts with L10 and the large rRNA to form the base of the stalk. L10 forms an elongated spine to which L12 dimers bind in a sequential fashion forming a multimeric L10(L12)X complex. One or more lysine residues are methylated.

Its function is as follows. Forms part of the ribosomal stalk which helps the ribosome interact with GTP-bound translation factors. The polypeptide is Large ribosomal subunit protein uL11 (Borrelia garinii subsp. bavariensis (strain ATCC BAA-2496 / DSM 23469 / PBi) (Borreliella bavariensis)).